The sequence spans 440 residues: Homocitrate synthase, mitochondrial (440 aa).

Residues 1-23 are compositionally biased toward polar residues; the sequence is MSENNEFQSVTESTTAPTTSNPY. Residues 1 to 27 form a disordered region; sequence MSENNEFQSVTESTTAPTTSNPYGPNP. The Pyruvate carboxyltransferase domain maps to 37 to 290; sequence FQLIDSTLRE…RSKYKLHKIR (254 aa). Residue Arg45 coordinates 2-oxoglutarate. Glu46 is a Mg(2+) binding site. Positions 105, 165, and 199 each coordinate 2-oxoglutarate. Mg(2+)-binding residues include His226 and His228. His323 functions as the Proton acceptor in the catalytic mechanism. At Ser399 the chain carries Phosphoserine. Position 410 is a phosphothreonine (Thr410).

Belongs to the alpha-IPM synthase/homocitrate synthase family. Homocitrate synthase LYS20/LYS21 subfamily. Requires Mg(2+) as cofactor. It depends on Mn(2+) as a cofactor.

The protein resides in the mitochondrion. The catalysed reaction is acetyl-CoA + 2-oxoglutarate + H2O = (2R)-homocitrate + CoA + H(+). It functions in the pathway amino-acid biosynthesis; L-lysine biosynthesis via AAA pathway; L-alpha-aminoadipate from 2-oxoglutarate: step 1/5. In terms of biological role, catalyzes the aldol-type condensation of 2-oxoglutarate with acetyl-CoA to yield homocitrate. Carries out the first step of the alpha-aminoadipate (AAA) lysine biosynthesis pathway. This Saccharomyces cerevisiae (strain ATCC 204508 / S288c) (Baker's yeast) protein is Homocitrate synthase, mitochondrial (LYS21).